A 368-amino-acid polypeptide reads, in one-letter code: D-alanine--D-alanine ligase (368 aa).

One can recognise an ATP-grasp domain in the interval 145–348; it reads KRLLQGAGLH…YQDLITTLIE (204 aa). 175 to 230 contributes to the ATP binding site; it reads ADQLGLPLFIKPANQGSSVGVNKATTEAEFTAAIEEAFSYDHKVLIEAAIKGREIE. Mg(2+) contacts are provided by D302, E315, and N317.

It belongs to the D-alanine--D-alanine ligase family. Mg(2+) is required as a cofactor. The cofactor is Mn(2+).

The protein resides in the cytoplasm. The catalysed reaction is 2 D-alanine + ATP = D-alanyl-D-alanine + ADP + phosphate + H(+). It functions in the pathway cell wall biogenesis; peptidoglycan biosynthesis. In terms of biological role, cell wall formation. In Shouchella clausii (strain KSM-K16) (Alkalihalobacillus clausii), this protein is D-alanine--D-alanine ligase.